The following is a 560-amino-acid chain: Hydroxyisourate hydrolase (560 aa).

An N-terminal signal peptide occupies residues 1–31; the sequence is MMEPPQTRLMINVFIVSFLALLVNLVVGVLG. Residues 32 to 517 lie on the Peroxisomal side of the membrane; the sequence is ADNYSRDDFP…LEQDPITCSK (486 aa). An N-linked (GlcNAc...) asparagine glycan is attached at Asn-34. Residues Gln-54 and 198–199 each bind a beta-D-glucoside; that span reads NE. The active-site Proton donor is Glu-199. An intrachain disulfide couples Cys-218 to Cys-223. Residues Asn-226 and Asn-231 are each glycosylated (N-linked (GlcNAc...) asparagine). Residue Tyr-343 coordinates a beta-D-glucoside. Asn-347 is a glycosylation site (N-linked (GlcNAc...) asparagine). Residue Glu-408 participates in a beta-D-glucoside binding. Glu-408 functions as the Nucleophile in the catalytic mechanism. Asn-416 carries N-linked (GlcNAc...) asparagine glycosylation. Residue Phe-467 participates in a beta-D-glucoside binding. Asn-489 carries N-linked (GlcNAc...) asparagine glycosylation. The helical transmembrane segment at 518 to 538 threads the bilayer; the sequence is SPIIFSKISKWVLASLLFLIQ. Topologically, residues 539–560 are cytoplasmic; that stretch reads HKIKFMWREPLPGQIPLKLVMF.

It belongs to the glycosyl hydrolase 1 family. Monomer. As to expression, highly expressed in uninfected root nodules. Detected in leaves, stems and roots.

It localises to the peroxisome membrane. The catalysed reaction is 5-hydroxyisourate + H2O = 5-hydroxy-2-oxo-4-ureido-2,5-dihydro-1H-imidazole-5-carboxylate + H(+). Its pathway is purine metabolism; urate degradation; (S)-allantoin from urate: step 2/3. Involved in the conversion of hydroxyisourate to ureides such as allantoin, the major form of nitrogen transport in legumes. The sequence is that of Hydroxyisourate hydrolase (HIUH) from Glycine max (Soybean).